Here is a 222-residue protein sequence, read N- to C-terminus: Phosphoglycolate phosphatase (222 aa).

The active-site Nucleophile is the Asp-8. Mg(2+)-binding residues include Asp-8 and Asp-10. Lys-150 is a binding site for substrate. Residues Asp-173 and Asp-177 each contribute to the Mg(2+) site.

Belongs to the archaeal SPP-like hydrolase family. It depends on Mg(2+) as a cofactor.

The catalysed reaction is 2-phosphoglycolate + H2O = glycolate + phosphate. Catalyzes the dephosphorylation of 2-phosphoglycolate. In Metallosphaera sedula (strain ATCC 51363 / DSM 5348 / JCM 9185 / NBRC 15509 / TH2), this protein is Phosphoglycolate phosphatase.